We begin with the raw amino-acid sequence, 216 residues long: Deoxyribose-phosphate aldolase (216 aa).

Asp89 functions as the Proton donor/acceptor in the catalytic mechanism. Lys152 serves as the catalytic Schiff-base intermediate with acetaldehyde. Lys181 serves as the catalytic Proton donor/acceptor.

The protein belongs to the DeoC/FbaB aldolase family. DeoC type 1 subfamily.

It is found in the cytoplasm. It catalyses the reaction 2-deoxy-D-ribose 5-phosphate = D-glyceraldehyde 3-phosphate + acetaldehyde. It participates in carbohydrate degradation; 2-deoxy-D-ribose 1-phosphate degradation; D-glyceraldehyde 3-phosphate and acetaldehyde from 2-deoxy-alpha-D-ribose 1-phosphate: step 2/2. Catalyzes a reversible aldol reaction between acetaldehyde and D-glyceraldehyde 3-phosphate to generate 2-deoxy-D-ribose 5-phosphate. This Clostridium tetani (strain Massachusetts / E88) protein is Deoxyribose-phosphate aldolase.